The chain runs to 160 residues: Phosphopantetheine adenylyltransferase (160 aa).

S9 provides a ligand contact to substrate. Residues 9-10 (SF) and H17 each bind ATP. Positions 41, 73, and 87 each coordinate substrate. ATP contacts are provided by residues 88-90 (GLR), E98, and 122-128 (YSFVSSS).

This sequence belongs to the bacterial CoaD family. As to quaternary structure, homohexamer. Mg(2+) serves as cofactor.

Its subcellular location is the cytoplasm. It carries out the reaction (R)-4'-phosphopantetheine + ATP + H(+) = 3'-dephospho-CoA + diphosphate. The protein operates within cofactor biosynthesis; coenzyme A biosynthesis; CoA from (R)-pantothenate: step 4/5. Its function is as follows. Reversibly transfers an adenylyl group from ATP to 4'-phosphopantetheine, yielding dephospho-CoA (dPCoA) and pyrophosphate. In Mycobacterium avium (strain 104), this protein is Phosphopantetheine adenylyltransferase.